We begin with the raw amino-acid sequence, 50 residues long: Sproutin (50 aa).

A Phosphoserine; by PKC modification is found at Ser8.

Brain.

Neurite outgrowth factor. The chain is Sproutin from Rattus norvegicus (Rat).